Here is a 113-residue protein sequence, read N- to C-terminus: Ribonuclease P protein component (113 aa).

Belongs to the RnpA family. In terms of assembly, consists of a catalytic RNA component (M1 or rnpB) and a protein subunit.

It carries out the reaction Endonucleolytic cleavage of RNA, removing 5'-extranucleotides from tRNA precursor.. RNaseP catalyzes the removal of the 5'-leader sequence from pre-tRNA to produce the mature 5'-terminus. It can also cleave other RNA substrates such as 4.5S RNA. The protein component plays an auxiliary but essential role in vivo by binding to the 5'-leader sequence and broadening the substrate specificity of the ribozyme. This chain is Ribonuclease P protein component, found in Ureaplasma parvum serovar 3 (strain ATCC 27815 / 27 / NCTC 11736).